The primary structure comprises 158 residues: uncharacterized protein (158 aa).

This is an uncharacterized protein from Bacillus subtilis (Bacteriophage phi-105).